The chain runs to 419 residues: 3-isopropylmalate dehydratase large subunit (419 aa).

[4Fe-4S] cluster-binding residues include Cys-300, Cys-360, and Cys-363.

This sequence belongs to the aconitase/IPM isomerase family. LeuC type 2 subfamily. In terms of assembly, heterodimer of LeuC and LeuD. It depends on [4Fe-4S] cluster as a cofactor.

It catalyses the reaction (2R,3S)-3-isopropylmalate = (2S)-2-isopropylmalate. The protein operates within amino-acid biosynthesis; L-leucine biosynthesis; L-leucine from 3-methyl-2-oxobutanoate: step 2/4. In terms of biological role, catalyzes the isomerization between 2-isopropylmalate and 3-isopropylmalate, via the formation of 2-isopropylmaleate. The chain is 3-isopropylmalate dehydratase large subunit from Nitratidesulfovibrio vulgaris (strain ATCC 29579 / DSM 644 / CCUG 34227 / NCIMB 8303 / VKM B-1760 / Hildenborough) (Desulfovibrio vulgaris).